We begin with the raw amino-acid sequence, 798 residues long: Penicillin-binding protein 1A (798 aa).

The Cytoplasmic portion of the chain corresponds to Met1–Cys9. Residues Phe10 to Ala30 form a helical; Signal-anchor for type II membrane protein membrane-spanning segment. The Periplasmic segment spans residues Thr31–Phe798. Positions Leu50–Glu218 are transglycosylase. Catalysis depends on Glu88, which acts as the Proton donor; for transglycosylase activity. The interval Arg378–Asp700 is transpeptidase. Ser461 functions as the Acyl-ester intermediate; for transpeptidase activity in the catalytic mechanism. Residues Leu739–Phe798 are disordered. Basic and acidic residues-rich tracts occupy residues Gly765 to Met777 and Asp788 to Phe798.

The protein in the N-terminal section; belongs to the glycosyltransferase 51 family. It in the C-terminal section; belongs to the transpeptidase family.

It is found in the cell inner membrane. It carries out the reaction [GlcNAc-(1-&gt;4)-Mur2Ac(oyl-L-Ala-gamma-D-Glu-L-Lys-D-Ala-D-Ala)](n)-di-trans,octa-cis-undecaprenyl diphosphate + beta-D-GlcNAc-(1-&gt;4)-Mur2Ac(oyl-L-Ala-gamma-D-Glu-L-Lys-D-Ala-D-Ala)-di-trans,octa-cis-undecaprenyl diphosphate = [GlcNAc-(1-&gt;4)-Mur2Ac(oyl-L-Ala-gamma-D-Glu-L-Lys-D-Ala-D-Ala)](n+1)-di-trans,octa-cis-undecaprenyl diphosphate + di-trans,octa-cis-undecaprenyl diphosphate + H(+). The catalysed reaction is Preferential cleavage: (Ac)2-L-Lys-D-Ala-|-D-Ala. Also transpeptidation of peptidyl-alanyl moieties that are N-acyl substituents of D-alanine.. The protein operates within cell wall biogenesis; peptidoglycan biosynthesis. In terms of biological role, cell wall formation. Synthesis of cross-linked peptidoglycan from the lipid intermediates. The enzyme has a penicillin-insensitive transglycosylase N-terminal domain (formation of linear glycan strands) and a penicillin-sensitive transpeptidase C-terminal domain (cross-linking of the peptide subunits). The protein is Penicillin-binding protein 1A (mrcA) of Neisseria lactamica.